Here is a 359-residue protein sequence, read N- to C-terminus: 5-amino-6-(D-ribitylamino)uracil--L-tyrosine 4-hydroxyphenyl transferase (359 aa).

One can recognise a Radical SAM core domain in the interval 45–282 (VTYVVNANIN…TYAISRIFFK (238 aa)). [4Fe-4S] cluster contacts are provided by Cys59, Cys63, and Cys66.

The protein belongs to the radical SAM superfamily. CofH family. As to quaternary structure, consists of two subunits, CofG and CofH. It depends on [4Fe-4S] cluster as a cofactor.

The catalysed reaction is 5-amino-6-(D-ribitylamino)uracil + L-tyrosine + S-adenosyl-L-methionine = 5-amino-5-(4-hydroxybenzyl)-6-(D-ribitylimino)-5,6-dihydrouracil + 2-iminoacetate + 5'-deoxyadenosine + L-methionine + H(+). Its pathway is cofactor biosynthesis; coenzyme F0 biosynthesis. Functionally, catalyzes the radical-mediated synthesis of 5-amino-5-(4-hydroxybenzyl)-6-(D-ribitylimino)-5,6-dihydrouracil from 5-amino-6-(D-ribitylamino)uracil and L-tyrosine. This Methanococcus maripaludis (strain C5 / ATCC BAA-1333) protein is 5-amino-6-(D-ribitylamino)uracil--L-tyrosine 4-hydroxyphenyl transferase.